We begin with the raw amino-acid sequence, 269 residues long: Dynein regulatory complex protein 8 (269 aa).

Positions 1–113 (MLGPGQVRLR…RTGKGLGYNS (113 aa)) are disordered. The segment covering 54–76 (AQGSSSPGIQSGPSSRPGSPRGA) has biased composition (low complexity). EF-hand domains lie at 150–185 (EFHKKIKEAFEVFDHESNNTVDVREIGTIIRSLGCC) and 228–263 (IPEDVLLRAFEVLDSAKRGFLTKDELIKYMTEEDGV).

Belongs to the DRC8 family. Component of the nexin-dynein regulatory complex (N-DRC).

It localises to the cytoplasm. It is found in the cytoskeleton. The protein resides in the flagellum axoneme. Its function is as follows. Component of the nexin-dynein regulatory complex (N-DRC), a key regulator of ciliary/flagellar motility which maintains the alignment and integrity of the distal axoneme and regulates microtubule sliding in motile axonemes. This Homo sapiens (Human) protein is Dynein regulatory complex protein 8 (EFCAB2).